The sequence spans 318 residues: Methionyl-tRNA formyltransferase (318 aa).

112–115 (SILP) contributes to the (6S)-5,6,7,8-tetrahydrofolate binding site.

The protein belongs to the Fmt family.

It catalyses the reaction L-methionyl-tRNA(fMet) + (6R)-10-formyltetrahydrofolate = N-formyl-L-methionyl-tRNA(fMet) + (6S)-5,6,7,8-tetrahydrofolate + H(+). Functionally, attaches a formyl group to the free amino group of methionyl-tRNA(fMet). The formyl group appears to play a dual role in the initiator identity of N-formylmethionyl-tRNA by promoting its recognition by IF2 and preventing the misappropriation of this tRNA by the elongation apparatus. The polypeptide is Methionyl-tRNA formyltransferase (Shewanella baltica (strain OS185)).